A 1061-amino-acid chain; its full sequence is E3 SUMO-protein ligase ZNF451 (1061 aa).

Residues 1 to 38 (MGDPGSEIIESVPPAGPEASESTTDENEDDIQFVSEGP) form a disordered region. A sufficient for E3 SUMO-protein ligase activity region spans residues 1–246 (MGDPGSEIIE…TDDGHNNNLL (246 aa)). The important for interaction with SUMO1 and SUMO2 stretch occupies residues 1–344 (MGDPGSEIIE…RVHCRNAGPV (344 aa)). Residues 30 to 37 (DIQFVSEG) form an interaction with SUMO2 1 region. The short motif at 38-41 (PLRP) is the PLRP element. The interaction with SUMO2 2 stretch occupies residues 42–50 (VLEYIDLVS). Glycyl lysine isopeptide (Lys-Gly) (interchain with G-Cter in SUMO2) cross-links involve residues lysine 75, lysine 77, lysine 106, isoleucine 121, alanine 130, leucine 138, lysine 139, lysine 144, and lysine 153. Phosphoserine is present on serine 155. Arginine 158 carries the omega-N-methylarginine modification. Residues valine 164 and lysine 167 each participate in a glycyl lysine isopeptide (Lys-Gly) (interchain with G-Cter in SUMO2) cross-link. Positions 168-525 (PILCPIMHCN…HMSRIHGGAH (358 aa)) are important for interaction with SMAD4. Residues 169–195 (ILCPIMHCNKEFDNGHLLLGHLKRFDH) form a C2H2-type 1 zinc finger. Residues glutamine 226, glycine 240, proline 247, serine 263, lysine 270, lysine 275, lysine 283, aspartate 286, lysine 288, proline 293, lysine 301, and lysine 309 each participate in a glycyl lysine isopeptide (Lys-Gly) (interchain with G-Cter in SUMO2) cross-link. The segment at 253 to 277 (FACPNCFLLFSRKEECSKHMSGKNH) adopts a C2H2-type 2 zinc-finger fold. A C2H2-type 3 zinc finger spans residues 315–337 (VKCVACHKTLRSHMELTAHFRVH). Lysine 357 participates in a covalent cross-link: Glycyl lysine isopeptide (Lys-Gly) (interchain with G-Cter in SUMO2). A C2H2-type 4 zinc finger spans residues 362-386 (GYCPDCNQVFVDETSTQNHKQNSGH). Residue lysine 423 forms a Glycyl lysine isopeptide (Lys-Gly) (interchain with G-Cter in SUMO2) linkage. Serine 432 is modified (phosphoserine). Residues lysine 434, lysine 446, lysine 452, lysine 454, lysine 464, phenylalanine 473, valine 490, cysteine 500, lysine 505, aspartate 508, glycine 522, tryptophan 532, lysine 543, and lysine 585 each participate in a glycyl lysine isopeptide (Lys-Gly) (interchain with G-Cter in SUMO2) cross-link. The segment at 498-521 (YKCVVCGKVCDDSGVIRLHMSRIH) adopts a C2H2-type 5 zinc-finger fold. The segment at 531-554 (FWCRTCKKELTRKDTIMAHVTEFH) adopts a C2H2-type 6 zinc-finger fold. The C2H2-type 7; atypical zinc-finger motif lies at 606–631 (WQCRICEDMFDSQEYVKQHCMSLASH). Glycyl lysine isopeptide (Lys-Gly) (interchain with G-Cter in SUMO2) cross-links involve residues lysine 632, lysine 647, and lysine 664. The segment at 636 to 659 (YSCAHCRKPFHKIETLYRHCQDEH) adopts a C2H2-type 8 zinc-finger fold. The C2H2-type 9 zinc-finger motif lies at 667–690 (YFCGLCDLIFNVEEAFLSHYEEHH). Residue lysine 706 forms a Glycyl lysine isopeptide (Lys-Gly) (interchain with G-Cter in SUMO1); alternate linkage. A Glycyl lysine isopeptide (Lys-Gly) (interchain with G-Cter in SUMO2); alternate cross-link involves residue lysine 706. Residues lysine 731 and lysine 748 each participate in a glycyl lysine isopeptide (Lys-Gly) (interchain with G-Cter in SUMO2) cross-link. The C2H2-type 10 zinc-finger motif lies at 753 to 776 (FRCSLCSATAQNLTDMNTHIHQVH). Residues lysine 777, lysine 779, lysine 790, lysine 817, lysine 827, lysine 832, lysine 843, lysine 845, lysine 852, lysine 951, lysine 992, and lysine 993 each participate in a glycyl lysine isopeptide (Lys-Gly) (interchain with G-Cter in SUMO2) cross-link. Residues 789 to 812 (IKCGTCTKAFHDPESAQQHFHRKH) form a C2H2-type 11 zinc finger. The interval 1050–1061 (LEEAIRRSLEEM) is important for ubiquitin binding.

The protein belongs to the krueppel C2H2-type zinc-finger protein family. Homooligomer. Interacts (via N-terminal region) with SUMO1. Interacts (via N-terminal region) with SUMO2. Interacts simultaneously with two SUMO2 chains. Identified in a complex with SUMO2 and UBE2I/UBC9, where one ZNF451 interacts with one UBE2I/UBC9 and two SUMO2 chains, one bound to the UBE2I/UBC9 active site and the other to another region of the same UBE2I/UBC9 molecule. Interacts (via C-terminus) with ubiquitin. Interacts (via N-terminal zinc-finger domains) with SMAD4 (via MH2 domain). Interacts with SMAD2 and SMAD3. Identified in a complex that contains at least ZNF451, SMAD2, SMAD3 and SMAD4. Interacts with EP300. Inhibits interaction between EP300 and the SMAD4 complex. Interacts with SIMC1. Post-translationally, sumoylated. Predominantly sumoylated on the N-terminal region that is important for interaction with SUMO1 and SUMO2. Sumoylation is important for localization in nuclear granules; desumoylation leads to diffuse nucleoplasmic location. Autosumoylated (in vitro). Sumoylation enhances E3 SUMO-protein ligase activity.

The protein localises to the nucleus. Its subcellular location is the PML body. The protein resides in the nucleoplasm. It participates in protein modification; protein sumoylation. In terms of biological role, E3 SUMO-protein ligase; has a preference for SUMO2 and SUMO3 and facilitates UBE2I/UBC9-mediated sumoylation of target proteins. Plays a role in protein SUMO2 modification in response to stress caused by DNA damage and by proteasome inhibitors (in vitro). Required for MCM4 sumoylation. Has no activity with SUMO1. Preferentially transfers an additional SUMO2 chain onto the SUMO2 consensus site 'Lys-11'. Negatively regulates transcriptional activation mediated by the SMAD4 complex in response to TGF-beta signaling. Inhibits EP300-mediated acetylation of histone H3 at 'Lys-9'. Plays a role in regulating the transcription of AR targets. The protein is E3 SUMO-protein ligase ZNF451 (ZNF451) of Homo sapiens (Human).